The primary structure comprises 74 residues: Exodeoxyribonuclease 7 small subunit (74 aa).

Belongs to the XseB family. In terms of assembly, heterooligomer composed of large and small subunits.

Its subcellular location is the cytoplasm. The catalysed reaction is Exonucleolytic cleavage in either 5'- to 3'- or 3'- to 5'-direction to yield nucleoside 5'-phosphates.. Functionally, bidirectionally degrades single-stranded DNA into large acid-insoluble oligonucleotides, which are then degraded further into small acid-soluble oligonucleotides. The polypeptide is Exodeoxyribonuclease 7 small subunit (Neisseria gonorrhoeae (strain ATCC 700825 / FA 1090)).